We begin with the raw amino-acid sequence, 340 residues long: 7,8-didemethyl-8-hydroxy-5-deazariboflavin synthase (340 aa).

The region spanning 25-256 (ATYSPAYTIV…SDITIQIPPN (232 aa)) is the Radical SAM core domain. Residues cysteine 39, cysteine 43, and cysteine 46 each contribute to the [4Fe-4S] cluster site.

This sequence belongs to the radical SAM superfamily. CofG family. As to quaternary structure, consists of two subunits, CofG and CofH. It depends on [4Fe-4S] cluster as a cofactor.

The enzyme catalyses 5-amino-5-(4-hydroxybenzyl)-6-(D-ribitylimino)-5,6-dihydrouracil + S-adenosyl-L-methionine = 7,8-didemethyl-8-hydroxy-5-deazariboflavin + 5'-deoxyadenosine + L-methionine + NH4(+) + H(+). It participates in cofactor biosynthesis; coenzyme F0 biosynthesis. In terms of biological role, catalyzes the radical-mediated synthesis of 7,8-didemethyl-8-hydroxy-5-deazariboflavin from 5-amino-5-(4-hydroxybenzyl)-6-(D-ribitylimino)-5,6-dihydrouracil. The chain is 7,8-didemethyl-8-hydroxy-5-deazariboflavin synthase from Trichormus variabilis (strain ATCC 29413 / PCC 7937) (Anabaena variabilis).